The chain runs to 495 residues: Glycerol kinase (495 aa).

Thr-11 is an ADP binding site. Residues Thr-11, Thr-12, and Ser-13 each coordinate ATP. Thr-11 is a sn-glycerol 3-phosphate binding site. Arg-15 is an ADP binding site. Residues Arg-81, Glu-82, Tyr-133, and Asp-242 each coordinate sn-glycerol 3-phosphate. Residues Arg-81, Glu-82, Tyr-133, Asp-242, and Gln-243 each contribute to the glycerol site. ADP-binding residues include Thr-264 and Gly-307. Positions 264, 307, 311, and 408 each coordinate ATP. Residues Gly-408 and Asn-412 each contribute to the ADP site.

This sequence belongs to the FGGY kinase family.

The catalysed reaction is glycerol + ATP = sn-glycerol 3-phosphate + ADP + H(+). Its pathway is polyol metabolism; glycerol degradation via glycerol kinase pathway; sn-glycerol 3-phosphate from glycerol: step 1/1. Its activity is regulated as follows. Inhibited by fructose 1,6-bisphosphate (FBP). Its function is as follows. Key enzyme in the regulation of glycerol uptake and metabolism. Catalyzes the phosphorylation of glycerol to yield sn-glycerol 3-phosphate. This chain is Glycerol kinase, found in Rhodospirillum rubrum (strain ATCC 11170 / ATH 1.1.1 / DSM 467 / LMG 4362 / NCIMB 8255 / S1).